An 828-amino-acid chain; its full sequence is Periplasmic nitrate reductase (828 aa).

Residues 1 to 31 (MKLSRRHFMKANAVAAAAAVAGITIPIAVRA) constitute a signal peptide (tat-type signal). In terms of domain architecture, 4Fe-4S Mo/W bis-MGD-type spans 39 to 95 (IHWDKAPCRFCGVGCGVLVGTQNGRIVASQGDPDAPVNRGLNCIKGYFLPKIMYGQD). Cys-46, Cys-49, Cys-53, and Cys-81 together coordinate [4Fe-4S] cluster. Residues Lys-83, Gln-150, Asn-175, Cys-179, 212–219 (WGSNMAEM), 243–247 (STYQH), 262–264 (QTD), Met-372, Gln-376, Asn-482, 508–509 (SD), Lys-531, Asp-558, and 718–727 (TGRVLEHWHT) contribute to the Mo-bis(molybdopterin guanine dinucleotide) site. Phe-794 provides a ligand contact to substrate. The Mo-bis(molybdopterin guanine dinucleotide) site is built by Asn-802 and Lys-819.

Belongs to the prokaryotic molybdopterin-containing oxidoreductase family. NasA/NapA/NarB subfamily. As to quaternary structure, component of the periplasmic nitrate reductase NapAB complex composed of NapA and NapB. The cofactor is [4Fe-4S] cluster. Mo-bis(molybdopterin guanine dinucleotide) serves as cofactor. In terms of processing, predicted to be exported by the Tat system. The position of the signal peptide cleavage has not been experimentally proven.

The protein resides in the periplasm. The catalysed reaction is 2 Fe(II)-[cytochrome] + nitrate + 2 H(+) = 2 Fe(III)-[cytochrome] + nitrite + H2O. Its function is as follows. Catalytic subunit of the periplasmic nitrate reductase complex NapAB. Receives electrons from NapB and catalyzes the reduction of nitrate to nitrite. In Pectobacterium carotovorum subsp. carotovorum (strain PC1), this protein is Periplasmic nitrate reductase.